The primary structure comprises 106 residues: Large ribosomal subunit protein eL34 (106 aa).

This sequence belongs to the eukaryotic ribosomal protein eL34 family.

This is Large ribosomal subunit protein eL34 from Hyperthermus butylicus (strain DSM 5456 / JCM 9403 / PLM1-5).